A 91-amino-acid polypeptide reads, in one-letter code: Small integral membrane protein 12-A (91 aa).

The chain crosses the membrane as a helical span at residues 12–34 (YAPYITFPVAFVVGAVGYQLEWF).

This sequence belongs to the SMIM12 family.

It localises to the membrane. In Xenopus laevis (African clawed frog), this protein is Small integral membrane protein 12-A (smim12-a).